A 101-amino-acid chain; its full sequence is Large ribosomal subunit protein eL21 (101 aa).

Basic residues predominate over residues 1-18; sequence MVKHSRGYRTRSRSLLRK. A disordered region spans residues 1–23; that stretch reads MVKHSRGYRTRSRSLLRKSPRER.

This sequence belongs to the eukaryotic ribosomal protein eL21 family.

The polypeptide is Large ribosomal subunit protein eL21 (Saccharolobus islandicus (strain Y.G.57.14 / Yellowstone #1) (Sulfolobus islandicus)).